Here is a 195-residue protein sequence, read N- to C-terminus: ATP-dependent Clp protease proteolytic subunit (195 aa).

The active-site Nucleophile is Ser98. The active site involves His123.

This sequence belongs to the peptidase S14 family. In terms of assembly, fourteen ClpP subunits assemble into 2 heptameric rings which stack back to back to give a disk-like structure with a central cavity, resembling the structure of eukaryotic proteasomes.

It localises to the cytoplasm. It catalyses the reaction Hydrolysis of proteins to small peptides in the presence of ATP and magnesium. alpha-casein is the usual test substrate. In the absence of ATP, only oligopeptides shorter than five residues are hydrolyzed (such as succinyl-Leu-Tyr-|-NHMec, and Leu-Tyr-Leu-|-Tyr-Trp, in which cleavage of the -Tyr-|-Leu- and -Tyr-|-Trp bonds also occurs).. Cleaves peptides in various proteins in a process that requires ATP hydrolysis. Has a chymotrypsin-like activity. Plays a major role in the degradation of misfolded proteins. This chain is ATP-dependent Clp protease proteolytic subunit, found in Staphylococcus aureus (strain Mu3 / ATCC 700698).